Consider the following 246-residue polypeptide: Ribosomal RNA small subunit methyltransferase J (246 aa).

S-adenosyl-L-methionine contacts are provided by residues 115 to 116 and aspartate 169; that span reads ER.

Belongs to the methyltransferase superfamily. RsmJ family.

The protein resides in the cytoplasm. It carries out the reaction guanosine(1516) in 16S rRNA + S-adenosyl-L-methionine = N(2)-methylguanosine(1516) in 16S rRNA + S-adenosyl-L-homocysteine + H(+). Its function is as follows. Specifically methylates the guanosine in position 1516 of 16S rRNA. The polypeptide is Ribosomal RNA small subunit methyltransferase J (Buchnera aphidicola subsp. Acyrthosiphon pisum (strain APS) (Acyrthosiphon pisum symbiotic bacterium)).